Reading from the N-terminus, the 202-residue chain is Phosphoenolpyruvate guanylyltransferase (202 aa).

Phosphoenolpyruvate-binding residues include T140, G156, and S159.

The protein belongs to the CofC family.

The enzyme catalyses phosphoenolpyruvate + GTP + H(+) = enolpyruvoyl-2-diphospho-5'-guanosine + diphosphate. The protein operates within cofactor biosynthesis; coenzyme F420 biosynthesis. In terms of biological role, guanylyltransferase that catalyzes the activation of phosphoenolpyruvate (PEP) as enolpyruvoyl-2-diphospho-5'-guanosine, via the condensation of PEP with GTP. It is involved in the biosynthesis of coenzyme F420, a hydride carrier cofactor. This is Phosphoenolpyruvate guanylyltransferase from Chloroflexus aggregans (strain MD-66 / DSM 9485).